A 55-amino-acid polypeptide reads, in one-letter code: Spermatid nuclear transition protein 1 (55 aa).

Residues Met-1–Lys-42 show a composition bias toward basic residues. The interval Met-1 to Leu-55 is disordered. Phosphoserine is present on residues Ser-9, Ser-37, and Ser-40.

Belongs to the nuclear transition protein 1 family. In terms of tissue distribution, testis.

It is found in the nucleus. The protein resides in the chromosome. Plays a key role in the replacement of histones to protamine in the elongating spermatids of mammals. In condensing spermatids, loaded onto the nucleosomes, where it promotes the recruitment and processing of protamines, which are responsible for histone eviction. This Sus scrofa (Pig) protein is Spermatid nuclear transition protein 1 (TNP1).